Consider the following 127-residue polypeptide: Large ribosomal subunit protein eL32 (127 aa).

Residues 37 to 48 (KWRKPKGTDSKM) show a composition bias toward basic and acidic residues. A disordered region spans residues 37–65 (KWRKPKGTDSKMRVKLKGKARSPSIGWSS).

Belongs to the eukaryotic ribosomal protein eL32 family.

The protein is Large ribosomal subunit protein eL32 of Thermococcus sibiricus (strain DSM 12597 / MM 739).